The sequence spans 639 residues: Protein P1 (639 aa).

The N-terminal stretch at Met-1 to Ala-20 is a signal peptide. 3 consecutive transmembrane segments (helical) span residues Ala-121 to Ala-141, Ile-144 to Ile-164, and Ala-172 to Trp-192. A Peptidase S39 domain is found at Val-207 to Glu-399. Residues His-255, Asp-286, and Ser-354 each act as for protease activity in the active site. 2 disordered regions span residues Thr-456–Ser-510 and Val-542–Ala-639. A compositionally biased stretch (polar residues) spans Thr-463–Pro-487. Basic residues predominate over residues Lys-551–Lys-561. The span at Asn-562–Ser-576 shows a compositional bias: polar residues.

This sequence belongs to the peptidase S39B family. Specific enzymatic cleavages in vivo yield mature proteins. The protease probably cleaves itself and releases the VPg protein. The VPg protein is probably further cleaved in its C-terminus.

Its subcellular location is the membrane. Precursor from which the VPg molecule is probably released at the onset of the RNA synthesis. Essential for virus replication. This chain is Protein P1, found in Solanum tuberosum (Potato).